Here is a 386-residue protein sequence, read N- to C-terminus: Trichocyst matrix protein T2-A (386 aa).

A signal peptide spans 1 to 19 (MKTVILALALIVLASSTQA). A propeptide spanning residues 20 to 48 (DVIATIKKIDQSPFGRTLFDTIYLELQTG) is cleaved from the precursor. A coiled-coil region spans residues 51 to 154 (LDRLLSTLTD…AEEHEDFEEK (104 aa)). Positions 184 to 238 (KGKATKQTHKFTKEVASMIQKHFTTSAKKTAKFQHRKGYSKLFKAFATIASKVEQ) are excised as a propeptide. The stretch at 293 to 332 (SALANATSDLASLNDIIAQVEASLDTTEQRIENVSADRHD) forms a coiled coil.

Belongs to the TMP family.

The protein localises to the trichocyst. Its function is as follows. Structural protein that crystallize inside the trichocyst matrix. This is Trichocyst matrix protein T2-A (T2A) from Paramecium tetraurelia.